Reading from the N-terminus, the 158-residue chain is uncharacterized protein (158 aa).

The HTH hxlR-type domain occupies E13–E110.

This is an uncharacterized protein from Mycobacterium tuberculosis (strain ATCC 25618 / H37Rv).